Reading from the N-terminus, the 172-residue chain is Adenine phosphoribosyltransferase (172 aa).

This sequence belongs to the purine/pyrimidine phosphoribosyltransferase family. Homodimer.

Its subcellular location is the cytoplasm. The catalysed reaction is AMP + diphosphate = 5-phospho-alpha-D-ribose 1-diphosphate + adenine. Its pathway is purine metabolism; AMP biosynthesis via salvage pathway; AMP from adenine: step 1/1. Catalyzes a salvage reaction resulting in the formation of AMP, that is energically less costly than de novo synthesis. The polypeptide is Adenine phosphoribosyltransferase (Clostridium acetobutylicum (strain ATCC 824 / DSM 792 / JCM 1419 / IAM 19013 / LMG 5710 / NBRC 13948 / NRRL B-527 / VKM B-1787 / 2291 / W)).